We begin with the raw amino-acid sequence, 343 residues long: Protease inhibitor Egf1.5a (343 aa).

A signal peptide spans 1–28; sequence MYIDTGIMSNNIFLFAFFALVGLTRIEA. Residues 52–104 form the TIL domain; the sequence is CRENEHYNSTRIECEDECNDRNNKLCYRFQQFCWCNEGYIRNSSHICVKLEDC.

The protein belongs to the polydnaviridae EGF-like motif protein family. As to quaternary structure, interacts with host PAP1, PAP3 and SPH2.

In terms of biological role, counteracts the host humoral immune response by inhibiting the processing and the amidolytic activity of host PAP1 and PAP3. Thereby, melanization of host hemolymph, normally producing several reactive intermediates toxic for viruses, is deregulated and proper immune response cannot occur. This is Protease inhibitor Egf1.5a (O1) from Microplitis demolitor bracovirus (isolate Webb) (MdBV).